Here is a 256-residue protein sequence, read N- to C-terminus: Triosephosphate isomerase (256 aa).

9 to 11 (NWK) lines the substrate pocket. The Electrophile role is filled by histidine 97. Glutamate 169 (proton acceptor) is an active-site residue. Residues glycine 175, serine 214, and 235–236 (GG) each bind substrate.

It belongs to the triosephosphate isomerase family. In terms of assembly, homodimer.

The protein localises to the cytoplasm. The catalysed reaction is D-glyceraldehyde 3-phosphate = dihydroxyacetone phosphate. It participates in carbohydrate biosynthesis; gluconeogenesis. Its pathway is carbohydrate degradation; glycolysis; D-glyceraldehyde 3-phosphate from glycerone phosphate: step 1/1. Involved in the gluconeogenesis. Catalyzes stereospecifically the conversion of dihydroxyacetone phosphate (DHAP) to D-glyceraldehyde-3-phosphate (G3P). This is Triosephosphate isomerase from Vibrio vulnificus (strain CMCP6).